The sequence spans 91 residues: Hepcidin-1 (91 aa).

The signal sequence occupies residues 1 to 24 (MKLSNVFLAAVVILTCVCVFQITA). A propeptide spanning residues 25 to 64 (VPFIQQVQDEHHVESEELQENQHLTEAEHRQTDPLVLFRT) is cleaved from the precursor. 4 disulfide bridges follow: C73–C89, C76–C79, C77–C85, and C80–C88.

This sequence belongs to the hepcidin family.

The protein resides in the secreted. Seems to act as a signaling molecule involved in the maintenance of iron homeostasis. Seems to be required in conjunction with HFE to regulate both intestinal iron absorption and iron storage in macrophages. May also have antimicrobial activity. The sequence is that of Hepcidin-1 (hamp1) from Danio rerio (Zebrafish).